The chain runs to 125 residues: Ribosome-binding factor A (125 aa).

Belongs to the RbfA family. In terms of assembly, monomer. Binds 30S ribosomal subunits, but not 50S ribosomal subunits or 70S ribosomes.

The protein localises to the cytoplasm. Functionally, one of several proteins that assist in the late maturation steps of the functional core of the 30S ribosomal subunit. Associates with free 30S ribosomal subunits (but not with 30S subunits that are part of 70S ribosomes or polysomes). Required for efficient processing of 16S rRNA. May interact with the 5'-terminal helix region of 16S rRNA. This chain is Ribosome-binding factor A, found in Carboxydothermus hydrogenoformans (strain ATCC BAA-161 / DSM 6008 / Z-2901).